A 164-amino-acid polypeptide reads, in one-letter code: Transcription antitermination protein NusB (164 aa).

This sequence belongs to the NusB family.

Involved in transcription antitermination. Required for transcription of ribosomal RNA (rRNA) genes. Binds specifically to the boxA antiterminator sequence of the ribosomal RNA (rrn) operons. The polypeptide is Transcription antitermination protein NusB (Mycolicibacterium gilvum (strain PYR-GCK) (Mycobacterium gilvum (strain PYR-GCK))).